Reading from the N-terminus, the 237-residue chain is MIIYPAVDIKDGRCVRLVQGEFDKVTVYSDNPVEMGLKWERMGAQYLHVVDLDGARTGQIQNTPIISEMAVKLGIPVQLGGGIRTVETIETLLCKGIHRVILGTSAVKNPELVKQALKTFEDSVVIGIDAKDGMVAIEGWAKTSEFTAIGFAKKMEELGAKTIIYTDISRDGMLAGPNLKAMEEMVKAVNIEVIASGGVRNIDDIRNLKNVGVSGVIVGKALYTGDLDLKEAIEVAK.

The Proton acceptor role is filled by Asp8. Asp129 functions as the Proton donor in the catalytic mechanism.

Belongs to the HisA/HisF family.

The protein localises to the cytoplasm. The catalysed reaction is 1-(5-phospho-beta-D-ribosyl)-5-[(5-phospho-beta-D-ribosylamino)methylideneamino]imidazole-4-carboxamide = 5-[(5-phospho-1-deoxy-D-ribulos-1-ylimino)methylamino]-1-(5-phospho-beta-D-ribosyl)imidazole-4-carboxamide. It functions in the pathway amino-acid biosynthesis; L-histidine biosynthesis; L-histidine from 5-phospho-alpha-D-ribose 1-diphosphate: step 4/9. This is 1-(5-phosphoribosyl)-5-[(5-phosphoribosylamino)methylideneamino] imidazole-4-carboxamide isomerase from Acetivibrio thermocellus (strain ATCC 27405 / DSM 1237 / JCM 9322 / NBRC 103400 / NCIMB 10682 / NRRL B-4536 / VPI 7372) (Clostridium thermocellum).